Consider the following 89-residue polypeptide: LYR motif-containing protein 4 (89 aa).

Residues 44–71 (KNIADSEKIEELLNKAKANLEVIQRQGT) are a coiled coil.

This sequence belongs to the complex I LYR family.

It is found in the mitochondrion. It localises to the nucleus. The protein operates within cofactor biosynthesis; iron-sulfur cluster biosynthesis. In terms of biological role, required for nuclear and mitochondrial iron-sulfur protein biosynthesis. This chain is LYR motif-containing protein 4 (LYRM4), found in Taeniopygia guttata (Zebra finch).